A 353-amino-acid chain; its full sequence is Serine/threonine-protein kinase SRK2G (353 aa).

One can recognise a Protein kinase domain in the interval 4 to 260 (YDVVKDLGAG…LKEIKNHPWY (257 aa)). ATP contacts are provided by residues 10–18 (LGAGNFGVA) and Lys33. Asp123 (proton acceptor) is an active-site residue. The disordered stretch occupies residues 299–353 (RNPAPSTSAVKSSGSGADEEEEEDVEAEVEEEEDDEDEYEKHVKEAQSCQESDKA). Positions 302-313 (APSTSAVKSSGS) are enriched in polar residues. The span at 315–336 (ADEEEEEDVEAEVEEEEDDEDE) shows a compositional bias: acidic residues. The span at 337-353 (YEKHVKEAQSCQESDKA) shows a compositional bias: basic and acidic residues.

The protein belongs to the protein kinase superfamily. Ser/Thr protein kinase family. Expressed in seedlings.

It localises to the nucleus. It catalyses the reaction L-seryl-[protein] + ATP = O-phospho-L-seryl-[protein] + ADP + H(+). The catalysed reaction is L-threonyl-[protein] + ATP = O-phospho-L-threonyl-[protein] + ADP + H(+). This Arabidopsis thaliana (Mouse-ear cress) protein is Serine/threonine-protein kinase SRK2G (SRK2G).